The chain runs to 274 residues: Large ribosomal subunit protein uL2 (274 aa).

A disordered region spans residues asparagine 197 to lysine 274. 2 stretches are compositionally biased toward basic residues: residues lysine 207 to asparagine 220 and proline 244 to lysine 274.

The protein belongs to the universal ribosomal protein uL2 family. As to quaternary structure, part of the 50S ribosomal subunit. Forms a bridge to the 30S subunit in the 70S ribosome.

In terms of biological role, one of the primary rRNA binding proteins. Required for association of the 30S and 50S subunits to form the 70S ribosome, for tRNA binding and peptide bond formation. It has been suggested to have peptidyltransferase activity; this is somewhat controversial. Makes several contacts with the 16S rRNA in the 70S ribosome. The chain is Large ribosomal subunit protein uL2 from Porphyromonas gingivalis (strain ATCC BAA-308 / W83).